Consider the following 510-residue polypeptide: NAD(P)H-quinone oxidoreductase subunit 2 A, chloroplastic (510 aa).

Transmembrane regions (helical) follow at residues 26–46 (LFDG…ILLL), 57–77 (IPWF…ALLF), 99–119 (IFQF…VEYI), 124–144 (MAIT…MFLC), 149–169 (LITI…LSGY), 183–203 (YLLM…WLYG), 227–247 (PGIS…LSPA), 295–315 (WHPL…LIAI), 323–342 (MLAY…IIVG), 354–374 (YMLF…LFGL), 395–415 (ALSL…AGFF), 418–438 (LHLF…IGLF), and 484–504 (MIVC…IIAI).

Belongs to the complex I subunit 2 family. NDH is composed of at least 16 different subunits, 5 of which are encoded in the nucleus.

Its subcellular location is the plastid. The protein localises to the chloroplast thylakoid membrane. The enzyme catalyses a plastoquinone + NADH + (n+1) H(+)(in) = a plastoquinol + NAD(+) + n H(+)(out). It catalyses the reaction a plastoquinone + NADPH + (n+1) H(+)(in) = a plastoquinol + NADP(+) + n H(+)(out). NDH shuttles electrons from NAD(P)H:plastoquinone, via FMN and iron-sulfur (Fe-S) centers, to quinones in the photosynthetic chain and possibly in a chloroplast respiratory chain. The immediate electron acceptor for the enzyme in this species is believed to be plastoquinone. Couples the redox reaction to proton translocation, and thus conserves the redox energy in a proton gradient. The polypeptide is NAD(P)H-quinone oxidoreductase subunit 2 A, chloroplastic (Oenothera biennis (German evening primrose)).